The chain runs to 488 residues: Pre-glycoprotein polyprotein GP complex (488 aa).

Gly-2 carries the N-myristoyl glycine; by host lipid modification. The Extracellular segment spans residues 2–17 (GQLFSFFEEVPNIIHE). The chain crosses the membrane as a helical span at residues 18 to 32 (AINIALIAVSLIAAL). Position 33 (Lys-33) is a topological domain, cytoplasmic. The helical transmembrane segment at 34-53 (GMINLWKSGLFQLIFFLTLA) threads the bilayer. Extracellular-facing segments span residues 54-58 (GRSCS) and 59-427 (FRIG…TLVD). Zn(2+) is bound at residue Cys-57. Residues Asn-69, Asn-88, Asn-99, Asn-125, Asn-171, Asn-178, and Asn-222 are each glycosylated (N-linked (GlcNAc...) asparagine; by host). 4 disulfide bridges follow: Cys-85–Cys-229, Cys-274–Cys-287, Cys-296–Cys-305, and Cys-359–Cys-380. N-linked (GlcNAc...) asparagine; by host glycosylation is found at Asn-360, Asn-368, Asn-385, and Asn-390. Residues 428–448 (ICFWSTLFFTTTLFLHLVGFP) form a helical membrane-spanning segment. The Cytoplasmic segment spans residues 449 to 488 (THRHIRGEPCPLPHRLNSRGGCRCGKYPELKKPITWHKNH). Zn(2+)-binding residues include His-450, His-452, Cys-458, His-462, Cys-470, Cys-472, and His-488.

Belongs to the arenaviridae GPC protein family. Homotetramer; disulfide-linked. As to quaternary structure, homotetramer. GP2 homotetramers bind through ionic interactions with GP1 homotetramers to form the GP complex together with the stable signal peptide. The GP-C polyprotein interacts with the host protease MBTPS1/SKI-1 resulting in the polyprotein processing. Post-translationally, specific enzymatic cleavages in vivo yield mature proteins. GP-C polyprotein is cleaved in the endoplasmic reticulum by the host protease MBTPS1. Only cleaved glycoprotein is incorporated into virions. In terms of processing, the SSP remains stably associated with the GP complex following cleavage by signal peptidase and plays crucial roles in the trafficking of GP through the secretory pathway. Myristoylation is necessary for GP2-mediated fusion activity.

Its subcellular location is the virion membrane. The protein resides in the host endoplasmic reticulum membrane. It is found in the host Golgi apparatus membrane. It localises to the host cell membrane. Its function is as follows. Interacts with the host receptor. Mediates virus attachment to host TFRC. This attachment induces virion internalization predominantly through clathrin-mediated endocytosis. In terms of biological role, class I viral fusion protein that directs fusion of viral and host endosomal membranes, leading to delivery of the nucleocapsid into the cytoplasm. Membrane fusion is mediated by irreversible conformational changes induced upon acidification in the endosome. Stable signal peptide (SSP): cleaved and functions as a signal peptide. In addition, it is also retained as the third component of the GP complex. The SSP is required for efficient glycoprotein expression, post-translational maturation cleavage of GP1 and GP2, glycoprotein transport to the cell surface plasma membrane, formation of infectious virus particles, and acid pH-dependent glycoprotein-mediated cell fusion. The polypeptide is Pre-glycoprotein polyprotein GP complex (Homo sapiens (Human)).